The following is a 455-amino-acid chain: Tubulin delta chain (455 aa).

143–149 (AGGTGSG) is a GTP binding site.

It belongs to the tubulin family. As to quaternary structure, found in a complex with TEDC1, TEDC2, TUBE1 and TUBD1. Highly expressed in testis.

Its subcellular location is the cell projection. The protein localises to the cilium. It localises to the cytoplasm. It is found in the cytoskeleton. The protein resides in the microtubule organizing center. Its subcellular location is the centrosome. The protein localises to the centriole. It localises to the nucleus. Its function is as follows. Acts as a positive regulator of hedgehog signaling and regulates ciliary function. This chain is Tubulin delta chain (Tubd1), found in Mus musculus (Mouse).